We begin with the raw amino-acid sequence, 520 residues long: GMP synthase [glutamine-hydrolyzing] (520 aa).

Positions 12 to 205 constitute a Glutamine amidotransferase type-1 domain; sequence KIIVLDYGSQ…AISICGARGD (194 aa). Catalysis depends on C89, which acts as the Nucleophile. Residues H179 and E181 contribute to the active site. Residues 206–395 enclose the GMPS ATP-PPase domain; the sequence is WSMDNFIDME…LGMPEEIVWR (190 aa). Residue 233 to 239 participates in ATP binding; it reads SGGVDSS.

As to quaternary structure, homodimer.

It carries out the reaction XMP + L-glutamine + ATP + H2O = GMP + L-glutamate + AMP + diphosphate + 2 H(+). It functions in the pathway purine metabolism; GMP biosynthesis; GMP from XMP (L-Gln route): step 1/1. Its function is as follows. Catalyzes the synthesis of GMP from XMP. The chain is GMP synthase [glutamine-hydrolyzing] from Streptococcus pyogenes serotype M2 (strain MGAS10270).